The chain runs to 664 residues: tRNA (carboxymethyluridine(34)-5-O)-methyltransferase ALKBH8 (664 aa).

One can recognise an RRM domain in the interval 43–120; that stretch reads QSLVVANGGL…QKIILYLNFV (78 aa). The 118-residue stretch at 220 to 337 folds into the Fe2OG dioxygenase domain; the sequence is KPDQMTINQY…RTSFTFRKVR (118 aa). Position 227–229 (227–229) interacts with 2-oxoglutarate; that stretch reads NQY. The Fe cation site is built by His238 and Asp240. His242 provides a ligand contact to Zn(2+). His292 contacts Fe cation. Arg328 and Arg334 together coordinate 2-oxoglutarate. Zn(2+) contacts are provided by Cys341, Cys343, and Cys349. A methyltransferase domain region spans residues 411–664; that stretch reads ADIGCGNGKY…GNWCVILQKA (254 aa). The segment at 516–575 is disordered; that stretch reads KYLKGNRNSQGKKEEMNSDTSVQRSLVEQMPDMGSRDSASSVPRINDSQEGGCNSRQVSN. The segment covering 552–575 has biased composition (polar residues); the sequence is DSASSVPRINDSQEGGCNSRQVSN.

The protein belongs to the alkB family. As to quaternary structure, interacts with TRMT112. Requires Fe(2+) as cofactor.

The protein localises to the cytoplasm. The protein resides in the nucleus. The catalysed reaction is 5-(carboxymethyl)uridine(34) in tRNA + S-adenosyl-L-methionine = 5-(2-methoxy-2-oxoethyl)uridine(34) in tRNA + S-adenosyl-L-homocysteine. Its function is as follows. Catalyzes the methylation of 5-carboxymethyl uridine to 5-methylcarboxymethyl uridine at the wobble position of the anticodon loop in tRNA via its methyltransferase domain. Catalyzes the last step in the formation of 5-methylcarboxymethyl uridine at the wobble position of the anticodon loop in target tRNA. Has a preference for tRNA(Arg) and tRNA(Glu), and does not bind tRNA(Lys). Binds tRNA and catalyzes the iron and alpha-ketoglutarate dependent hydroxylation of 5-methylcarboxymethyl uridine at the wobble position of the anticodon loop in tRNA via its dioxygenase domain, giving rise to 5-(S)-methoxycarbonylhydroxymethyluridine; has a preference for tRNA(Gly). Required for normal survival after DNA damage. May inhibit apoptosis and promote cell survival and angiogenesis. The chain is tRNA (carboxymethyluridine(34)-5-O)-methyltransferase ALKBH8 (ALKBH8) from Macaca fascicularis (Crab-eating macaque).